The primary structure comprises 121 residues: Large ribosomal subunit protein uL18 (121 aa).

Belongs to the universal ribosomal protein uL18 family. In terms of assembly, part of the 50S ribosomal subunit; part of the 5S rRNA/L5/L18/L25 subcomplex. Contacts the 5S and 23S rRNAs.

This is one of the proteins that bind and probably mediate the attachment of the 5S RNA into the large ribosomal subunit, where it forms part of the central protuberance. This chain is Large ribosomal subunit protein uL18, found in Albidiferax ferrireducens (strain ATCC BAA-621 / DSM 15236 / T118) (Rhodoferax ferrireducens).